Here is a 511-residue protein sequence, read N- to C-terminus: MAALRGAAARFRGRAPGGARGAAGRQCYDLLVIGGGSGGLACAKEAAQLGKKVAVLDYVEPSPQGTRWGLGGTCVNVGCIPKKLMHQAALLGGMIRDAPHYGWGVAQAPHSWATLADAVQNHVKSLNWGHRIQLQDRKVKYFNVKASFVDTHTVCGVSKGGEETLLSAEHIVIATGGRPRYPTHIEGALEYGITSDDLFWLKESPGKTLVVGASYVALECAGLLTGLGLDTTVMIRSVPLRAFDQQMASLVTEHMAGHGTRILRGCAPEKVEKLPGQQLRVTWVDLTSDRKDAGTFDTVLWAIGRVPETASLNLEKAGVHTNPVTGKILVDAQETTSVPHIYAIGDVAEGRPELTPTAIMAGRLLAQRLSGRTSDLMDYSSVPTTVFTPLEYGCVGLSEEAAVARHGEEHVEVYHAFYKPLEFTVPQRDASQCYIKMVCLREPPQLVLGLHFLGPNAGEVIQGFALGIKCGASYQQLMRTVGIHPTCAEEVAKLRISKRSGLDPTVTGCUG.

A mitochondrion-targeting transit peptide spans Met-1 to Gly-21. Asp-29 to Tyr-58 is an FAD binding site. Cys-74 and Cys-79 are disulfide-bonded. Lys-316 carries the N6-succinyllysine modification. Residue His-484 is the Proton acceptor of the active site. Positions Cys-509–Sec-510 form a cross-link, cysteinyl-selenocysteine (Cys-Sec). A non-standard amino acid (selenocysteine) is located at residue Sec-510.

The protein belongs to the class-I pyridine nucleotide-disulfide oxidoreductase family. As to quaternary structure, homodimer. FAD serves as cofactor.

The protein localises to the mitochondrion. The enzyme catalyses [thioredoxin]-dithiol + NADP(+) = [thioredoxin]-disulfide + NADPH + H(+). With respect to regulation, inhibited by 1-chloro-2,4-dinitrobenzene and by zinc, calcium, magnesium and Fe(2+) ions. Involved in the control of reactive oxygen species levels and the regulation of mitochondrial redox homeostasis. Maintains thioredoxin in a reduced state. May play a role in redox-regulated cell signaling. The sequence is that of Thioredoxin reductase 2, mitochondrial (TXNRD2) from Bos taurus (Bovine).